The following is a 462-amino-acid chain: A-type ATP synthase subunit B (462 aa).

It belongs to the ATPase alpha/beta chains family. In terms of assembly, has multiple subunits with at least A(3), B(3), C, D, E, F, H, I and proteolipid K(x).

The protein resides in the cell membrane. In terms of biological role, component of the A-type ATP synthase that produces ATP from ADP in the presence of a proton gradient across the membrane. The B chain is a regulatory subunit. In Cenarchaeum symbiosum (strain A), this protein is A-type ATP synthase subunit B.